Reading from the N-terminus, the 274-residue chain is Large ribosomal subunit protein uL2 (274 aa).

Positions 224–256 (AMNPIDHPHGGGEGRTGEGRHAVDPWGNLTKGY) are disordered. The span at 229-246 (DHPHGGGEGRTGEGRHAV) shows a compositional bias: basic and acidic residues.

This sequence belongs to the universal ribosomal protein uL2 family. In terms of assembly, part of the 50S ribosomal subunit. Forms a bridge to the 30S subunit in the 70S ribosome.

In terms of biological role, one of the primary rRNA binding proteins. Required for association of the 30S and 50S subunits to form the 70S ribosome, for tRNA binding and peptide bond formation. It has been suggested to have peptidyltransferase activity; this is somewhat controversial. Makes several contacts with the 16S rRNA in the 70S ribosome. This Acidovorax sp. (strain JS42) protein is Large ribosomal subunit protein uL2.